The primary structure comprises 187 residues: dITP/XTP pyrophosphatase (187 aa).

Residue 7 to 12 (TGNKHK) coordinates substrate. Positions 36 and 64 each coordinate Mg(2+). Asp64 (proton acceptor) is an active-site residue. Substrate is bound by residues Ala65, 140-143 (FAFD), Lys163, and 168-169 (HR).

The protein belongs to the HAM1 NTPase family. In terms of assembly, homodimer. Requires Mg(2+) as cofactor.

It catalyses the reaction XTP + H2O = XMP + diphosphate + H(+). The catalysed reaction is dITP + H2O = dIMP + diphosphate + H(+). The enzyme catalyses ITP + H2O = IMP + diphosphate + H(+). Functionally, pyrophosphatase that catalyzes the hydrolysis of nucleoside triphosphates to their monophosphate derivatives, with a high preference for the non-canonical purine nucleotides XTP (xanthosine triphosphate), dITP (deoxyinosine triphosphate) and ITP. Seems to function as a house-cleaning enzyme that removes non-canonical purine nucleotides from the nucleotide pool, thus preventing their incorporation into DNA/RNA and avoiding chromosomal lesions. The protein is dITP/XTP pyrophosphatase of Methanothermobacter marburgensis (strain ATCC BAA-927 / DSM 2133 / JCM 14651 / NBRC 100331 / OCM 82 / Marburg) (Methanobacterium thermoautotrophicum).